A 159-amino-acid chain; its full sequence is Neuroglobin (159 aa).

The Globin domain maps to 3 to 151 (KLSSKDKELI…VVASMSRGWA (149 aa)). Residues histidine 66 and histidine 98 each coordinate heme b.

Belongs to the globin family. As to quaternary structure, monomer. Homodimers and homotetramers. Mainly monomeric but also detected as part of homodimers and homotetramers.

Its subcellular location is the cytoplasm. It is found in the cytosol. The protein localises to the mitochondrion matrix. The catalysed reaction is Fe(III)-heme b-[protein] + nitric oxide + H2O = Fe(II)-heme b-[protein] + nitrite + 2 H(+). In terms of biological role, monomeric globin with a bis-histidyl six-coordinate heme-iron atom through which it can bind dioxygen, carbon monoxide and nitric oxide. Could help transport oxygen and increase its availability to the metabolically active neuronal tissues, though its low quantity in tissues as well as its high affinity for dioxygen, which may limit its oxygen-releasing ability, argue against it. The ferrous/deoxygenated form exhibits a nitrite reductase activity and it could produce nitric oxide which in turn inhibits cellular respiration in response to hypoxia. In its ferrous/deoxygenated state, it may also exhibit GDI (Guanine nucleotide Dissociation Inhibitor) activity toward heterotrimeric G-alpha proteins, thereby regulating signal transduction to facilitate neuroprotective responses in the wake of hypoxia and associated oxidative stress. The polypeptide is Neuroglobin (ngb) (Tetraodon nigroviridis (Spotted green pufferfish)).